The chain runs to 368 residues: Spermidine/putrescine import ATP-binding protein PotA (368 aa).

Residues 8–238 (IELKNVSKIF…PVNLFVARFV (231 aa)) form the ABC transporter domain. 40-47 (GPSGCGKT) provides a ligand contact to ATP.

It belongs to the ABC transporter superfamily. Spermidine/putrescine importer (TC 3.A.1.11.1) family. The complex is composed of two ATP-binding proteins (PotA), two transmembrane proteins (PotB and PotC) and a solute-binding protein (PotD).

It is found in the cell membrane. The enzyme catalyses ATP + H2O + polyamine-[polyamine-binding protein]Side 1 = ADP + phosphate + polyamineSide 2 + [polyamine-binding protein]Side 1.. Functionally, part of the ABC transporter complex PotABCD involved in spermidine/putrescine import. Responsible for energy coupling to the transport system. In Lawsonia intracellularis (strain PHE/MN1-00), this protein is Spermidine/putrescine import ATP-binding protein PotA.